Here is a 213-residue protein sequence, read N- to C-terminus: Orotate phosphoribosyltransferase (213 aa).

Lysine 26 contacts 5-phospho-alpha-D-ribose 1-diphosphate. 34-35 is a binding site for orotate; the sequence is FF. 5-phospho-alpha-D-ribose 1-diphosphate contacts are provided by residues 72–73, arginine 99, lysine 100, lysine 103, histidine 105, and 124–132; these read YK and DDVITAGTA. Orotate-binding residues include threonine 128 and arginine 156.

Belongs to the purine/pyrimidine phosphoribosyltransferase family. PyrE subfamily. In terms of assembly, homodimer. Requires Mg(2+) as cofactor.

It carries out the reaction orotidine 5'-phosphate + diphosphate = orotate + 5-phospho-alpha-D-ribose 1-diphosphate. It participates in pyrimidine metabolism; UMP biosynthesis via de novo pathway; UMP from orotate: step 1/2. Catalyzes the transfer of a ribosyl phosphate group from 5-phosphoribose 1-diphosphate to orotate, leading to the formation of orotidine monophosphate (OMP). The sequence is that of Orotate phosphoribosyltransferase from Yersinia enterocolitica serotype O:8 / biotype 1B (strain NCTC 13174 / 8081).